A 482-amino-acid polypeptide reads, in one-letter code: Ribosomal RNA small subunit methyltransferase F (482 aa).

Residues 119–125 (ASAPGSK), E143, D170, and D188 each bind S-adenosyl-L-methionine. Catalysis depends on C241, which acts as the Nucleophile.

The protein belongs to the class I-like SAM-binding methyltransferase superfamily. RsmB/NOP family.

The protein localises to the cytoplasm. The enzyme catalyses cytidine(1407) in 16S rRNA + S-adenosyl-L-methionine = 5-methylcytidine(1407) in 16S rRNA + S-adenosyl-L-homocysteine + H(+). Its function is as follows. Specifically methylates the cytosine at position 1407 (m5C1407) of 16S rRNA. In Shewanella sp. (strain MR-7), this protein is Ribosomal RNA small subunit methyltransferase F.